The sequence spans 134 residues: Acyl carrier protein, chloroplastic (134 aa).

The transit peptide at 1–51 directs the protein to the chloroplast; that stretch reads MSTTFCSSVSMQATSLAATTRISFQKPGLVSRTNLSFNLRRSIPTRLSVSC. One can recognise a Carrier domain in the interval 55 to 130; it reads PETVEKVSKI…EAAELIEELV (76 aa). Position 90 is an O-(pantetheine 4'-phosphoryl)serine (Ser-90).

This sequence belongs to the acyl carrier protein (ACP) family. In terms of processing, 4'-phosphopantetheine is transferred from CoA to a specific serine of apo-ACP by acpS. This modification is essential for activity because fatty acids are bound in thioester linkage to the sulfhydryl of the prosthetic group. In terms of tissue distribution, seed.

Its subcellular location is the plastid. The protein resides in the chloroplast. The protein operates within lipid metabolism; fatty acid biosynthesis. Its function is as follows. Carrier of the growing fatty acid chain in fatty acid biosynthesis. The protein is Acyl carrier protein, chloroplastic (ACL1.A2) of Brassica napus (Rape).